We begin with the raw amino-acid sequence, 359 residues long: Membrane-bound lytic murein transglycosylase C (359 aa).

The N-terminal stretch at 1–16 (MKKYLALALIAPLLIS) is a signal peptide. C17 carries the N-palmitoyl cysteine lipid modification. C17 carries S-diacylglycerol cysteine lipidation.

Belongs to the transglycosylase Slt family.

Its subcellular location is the cell outer membrane. The catalysed reaction is Exolytic cleavage of the (1-&gt;4)-beta-glycosidic linkage between N-acetylmuramic acid (MurNAc) and N-acetylglucosamine (GlcNAc) residues in peptidoglycan, from either the reducing or the non-reducing ends of the peptidoglycan chains, with concomitant formation of a 1,6-anhydrobond in the MurNAc residue.. Murein-degrading enzyme. May play a role in recycling of muropeptides during cell elongation and/or cell division. In Escherichia coli O157:H7, this protein is Membrane-bound lytic murein transglycosylase C.